The primary structure comprises 419 residues: Transcription regulator lscL (419 aa).

The segment at residues 12–35 (RIRKVKCDEKKPCCQKCIDTGRTC) is a DNA-binding region (zn(2)-C6 fungal-type).

The protein localises to the nucleus. Its function is as follows. Transcription factor that may coregulate the expression of the gene cluster that mediates the biosynthesis of the lipopeptide antibiotics leucinostatins that show extensive biological activities, including antimalarial, antiviral, antibacterial, antifungal, and antitumor activities, as well as phytotoxic. The sequence is that of Transcription regulator lscL from Purpureocillium lilacinum (Paecilomyces lilacinus).